The primary structure comprises 440 residues: tRNA(Ile)-lysidine synthase (440 aa).

31–36 is a binding site for ATP; it reads SGGADS.

The protein belongs to the tRNA(Ile)-lysidine synthase family.

Its subcellular location is the cytoplasm. The enzyme catalyses cytidine(34) in tRNA(Ile2) + L-lysine + ATP = lysidine(34) in tRNA(Ile2) + AMP + diphosphate + H(+). Functionally, ligates lysine onto the cytidine present at position 34 of the AUA codon-specific tRNA(Ile) that contains the anticodon CAU, in an ATP-dependent manner. Cytidine is converted to lysidine, thus changing the amino acid specificity of the tRNA from methionine to isoleucine. In Borrelia garinii subsp. bavariensis (strain ATCC BAA-2496 / DSM 23469 / PBi) (Borreliella bavariensis), this protein is tRNA(Ile)-lysidine synthase.